Here is a 615-residue protein sequence, read N- to C-terminus: Chaperone protein HscA homolog (615 aa).

Belongs to the heat shock protein 70 family.

Chaperone involved in the maturation of iron-sulfur cluster-containing proteins. Has a low intrinsic ATPase activity which is markedly stimulated by HscB. This is Chaperone protein HscA homolog from Aeromonas hydrophila subsp. hydrophila (strain ATCC 7966 / DSM 30187 / BCRC 13018 / CCUG 14551 / JCM 1027 / KCTC 2358 / NCIMB 9240 / NCTC 8049).